A 399-amino-acid chain; its full sequence is Glutathione-independent formaldehyde dehydrogenase (399 aa).

Cysteine 47 contributes to the Zn(2+) binding site. Residues glycine 48, serine 49, and histidine 52 each contribute to the NAD(+) site. Positions 68, 98, 101, 104, 112, and 170 each coordinate Zn(2+). 8 residues coordinate NAD(+): valine 198, aspartate 218, arginine 223, valine 263, arginine 268, proline 300, glutamine 338, and threonine 339.

This sequence belongs to the zinc-containing alcohol dehydrogenase family. Homotetramer. Zn(2+) serves as cofactor.

It carries out the reaction formaldehyde + NAD(+) + H2O = formate + NADH + 2 H(+). The catalysed reaction is acetaldehyde + NAD(+) + H2O = acetate + NADH + 2 H(+). Dehydrogenase that catalyzes the NAD(+)-dependent oxidation of formaldehyde and acetaldehyde. Shows no detectable activity against either aldehydes with longer carbon chains or ethanol. This chain is Glutathione-independent formaldehyde dehydrogenase, found in Pseudomonas aeruginosa (strain LESB58).